Reading from the N-terminus, the 743-residue chain is Catalase-peroxidase (743 aa).

Residues 1–22 (MEKQSNDAAVAGAPNDHGAAKC) form a disordered region. Positions 105–227 (WHSAGTYRIT…LGAVQMGLIY (123 aa)) form a cross-link, tryptophyl-tyrosyl-methioninium (Trp-Tyr) (with M-253). Histidine 106 serves as the catalytic Proton acceptor. Residues 227–253 (YVNPEGPNGNPDPVAAAKDIRETFFRM) constitute a cross-link (tryptophyl-tyrosyl-methioninium (Tyr-Met) (with W-105)). A heme b-binding site is contributed by histidine 268.

It belongs to the peroxidase family. Peroxidase/catalase subfamily. In terms of assembly, homodimer or homotetramer. Requires heme b as cofactor. Formation of the three residue Trp-Tyr-Met cross-link is important for the catalase, but not the peroxidase activity of the enzyme.

The enzyme catalyses H2O2 + AH2 = A + 2 H2O. It catalyses the reaction 2 H2O2 = O2 + 2 H2O. Bifunctional enzyme with both catalase and broad-spectrum peroxidase activity. The protein is Catalase-peroxidase of Solibacter usitatus (strain Ellin6076).